The sequence spans 340 residues: MLVLAIETSCDETAAALVDGGRRILSSVVSSQVAIHAEYGGVVPEIASRKHLEMISPVISQALAEAGVSFGDIQGVAVTRGPGLSGALLVGLSAAKAIACARGIPFVGVHHIEGHLFAPFLERPVEFPFLALVVSGGHTHLYLVEGFGRYRTLGRTLDDAAGEAFDKSAKIMGLPYPGGARIDAMAQEGSPGAIRLPRPLLADGGLNFSFSGLKTAMLNRITKHPVSIPGAEANDLCASFQQAVCDVLVAKTAAALERTGVTRLVVAGGVACNSGLRRSMQALASGLSIDLRIPAPALCGDNAAMLAVPGNHYLEQGHASELSMDVTATWDMDRVGEGRS.

Fe cation contacts are provided by His-111 and His-115. Residues 133-137 (VVSGG), Asp-166, Gly-179, Asp-183, and Asn-273 each bind substrate. Asp-301 is a Fe cation binding site.

Belongs to the KAE1 / TsaD family. The cofactor is Fe(2+).

Its subcellular location is the cytoplasm. It catalyses the reaction L-threonylcarbamoyladenylate + adenosine(37) in tRNA = N(6)-L-threonylcarbamoyladenosine(37) in tRNA + AMP + H(+). Functionally, required for the formation of a threonylcarbamoyl group on adenosine at position 37 (t(6)A37) in tRNAs that read codons beginning with adenine. Is involved in the transfer of the threonylcarbamoyl moiety of threonylcarbamoyl-AMP (TC-AMP) to the N6 group of A37, together with TsaE and TsaB. TsaD likely plays a direct catalytic role in this reaction. The sequence is that of tRNA N6-adenosine threonylcarbamoyltransferase from Pelobacter propionicus (strain DSM 2379 / NBRC 103807 / OttBd1).